The following is a 956-amino-acid chain: RNA-binding protein 44 (956 aa).

The segment at Asp301 to Val321 is disordered. The 75-residue stretch at Ser750–Gly824 folds into the RRM domain. The disordered stretch occupies residues Lys831 to Lys855. Residues Ser840–Thr854 are compositionally biased toward basic and acidic residues.

The protein resides in the cytoplasm. Component of intercellular bridges during meiosis. Intercellular bridges are evolutionarily conserved structures that connect differentiating germ cells. Not required for fertility. This Danio rerio (Zebrafish) protein is RNA-binding protein 44 (rbm44).